A 326-amino-acid polypeptide reads, in one-letter code: MRIALDAMGGDRAPQVVVAGAAAAAREGVEVLLVGDEAQVRAELARLGADLPVWHAPDHIRMEEAATEVRRRPQASVRVAMELLKRGEVQAVVSMGHSGATLAAALLVLGRVKGVERPALLVEFPSLRGRTFLLDGGANADCRPSFLVQFAAMGLAYAEASGALAPRVGLLSIGEEEGKGNALVQEAYPLLRAALGERFYGNVEGRDIFLGTTEVVVTDGFTGNVALKLAEGEARVLLTWIKEALTSSFRARLGALLVREALARVKARVDPAQYGAMPLLGVEGAVFIGHGSADALAVKNALLRAKAMVEAGLLARVRQRLSALHV.

This sequence belongs to the PlsX family. Homodimer. Probably interacts with PlsY.

Its subcellular location is the cytoplasm. It carries out the reaction a fatty acyl-[ACP] + phosphate = an acyl phosphate + holo-[ACP]. Its pathway is lipid metabolism; phospholipid metabolism. Functionally, catalyzes the reversible formation of acyl-phosphate (acyl-PO(4)) from acyl-[acyl-carrier-protein] (acyl-ACP). This enzyme utilizes acyl-ACP as fatty acyl donor, but not acyl-CoA. In Thermus thermophilus (strain ATCC BAA-163 / DSM 7039 / HB27), this protein is Phosphate acyltransferase.